The following is a 90-amino-acid chain: Mitochondrial import inner membrane translocase subunit tim9 (90 aa).

A Twin CX3C motif motif is present at residues 35–59; the sequence is CFDNCVNDFTTKSLISREEGCIMRC. Disulfide bonds link C35-C59 and C39-C55.

Belongs to the small Tim family. As to quaternary structure, heterohexamer; composed of 3 copies of TIM9 and 3 copies of TIM10, named soluble 70 kDa complex. Associates with the TIM22 complex, whose core is composed of TIM22 and TIM54. Interacts with the transmembrane regions of multi-pass transmembrane proteins in transit.

The protein resides in the mitochondrion inner membrane. Its function is as follows. Mitochondrial intermembrane chaperone that participates in the import and insertion of multi-pass transmembrane proteins into the mitochondrial inner membrane. Also required for the transfer of beta-barrel precursors from the TOM complex to the sorting and assembly machinery (SAM complex) of the outer membrane. Acts as a chaperone-like protein that protects the hydrophobic precursors from aggregation and guide them through the mitochondrial intermembrane space. This Aspergillus fumigatus (strain ATCC MYA-4609 / CBS 101355 / FGSC A1100 / Af293) (Neosartorya fumigata) protein is Mitochondrial import inner membrane translocase subunit tim9 (tim9).